The chain runs to 992 residues: P3N-PIPO polyprotein (992 aa).

The Peptidase S30 domain occupies 168–308; sequence TSQCRKPTYV…VENMEDIQHY (141 aa). Residues His-221, Glu-230, and Ser-262 each act as for P1 proteinase activity in the active site. Positions 361 to 364 match the Involved in interaction with stylet and aphid transmission motif; that stretch reads KLSC. The short motif at 617–619 is the Involved in virions binding and aphid transmission element; the sequence is PTK. The Peptidase C6 domain occupies 643-765; the sequence is MYIAKEGFCY…QSEMKFYRVG (123 aa). Residues Cys-651 and His-724 each act as for helper component proteinase activity in the active site.

This sequence belongs to the potyviridae P3N-PIPO polyprotein family. In terms of assembly, interacts (via PIPO domain) with host PCaP1 protein; this interaction may help to anchor the movement complex to the plasma membrane from which the complex could move to the plasmodesmata. Post-translationally, potyviral RNA is expressed as two polyproteins which undergo post-translational proteolytic processing. Genome polyprotein is processed by NIa-pro, P1 and HC-pro proteinases resulting in the production of at least ten individual proteins. P3N-PIPO is cleaved by P1 and HC-pro proteinases resulting in the production of three individual proteins. The P1 proteinase and the HC-pro cleave only their respective C-termini autocatalytically.

The protein resides in the host cell junction. It is found in the host plasmodesma. The catalysed reaction is Hydrolyzes a Gly-|-Gly bond at its own C-terminus, commonly in the sequence -Tyr-Xaa-Val-Gly-|-Gly, in the processing of the potyviral polyprotein.. Functionally, required for aphid transmission and also has proteolytic activity. Only cleaves a Gly-Gly dipeptide at its own C-terminus. Interacts with virions and aphid stylets. Acts as a suppressor of RNA-mediated gene silencing, also known as post-transcriptional gene silencing (PTGS), a mechanism of plant viral defense that limits the accumulation of viral RNAs. May have RNA-binding activity. In terms of biological role, allows efficient cell to cell propagation, by bypassing the host cell wall barrier. Transports viral genome to neighboring plant cells directly through plasmosdesmata, without any budding. The polypeptide is P3N-PIPO polyprotein (Glycine max (Soybean)).